The chain runs to 103 residues: Small ribosomal subunit protein uS10 (103 aa).

The protein belongs to the universal ribosomal protein uS10 family. As to quaternary structure, part of the 30S ribosomal subunit.

Involved in the binding of tRNA to the ribosomes. This Leptothrix cholodnii (strain ATCC 51168 / LMG 8142 / SP-6) (Leptothrix discophora (strain SP-6)) protein is Small ribosomal subunit protein uS10.